Consider the following 116-residue polypeptide: Fluoride-specific ion channel FluC 1 (116 aa).

The next 4 membrane-spanning stretches (helical) occupy residues 2–22, 33–53, 63–83, and 96–116; these read LVLV…RYGI, PLPI…GWIL, IFLG…INEL, and WEYF…GTLI. Na(+) is bound by residues G71 and T74.

Belongs to the fluoride channel Fluc/FEX (TC 1.A.43) family.

The protein localises to the cell membrane. The catalysed reaction is fluoride(in) = fluoride(out). Na(+) is not transported, but it plays an essential structural role and its presence is essential for fluoride channel function. Fluoride-specific ion channel. Important for reducing fluoride concentration in the cell, thus reducing its toxicity. The sequence is that of Fluoride-specific ion channel FluC 1 from Lactiplantibacillus plantarum (strain ATCC BAA-793 / NCIMB 8826 / WCFS1) (Lactobacillus plantarum).